The primary structure comprises 289 residues: Protease HtpX (289 aa).

2 consecutive transmembrane segments (helical) span residues 5-25 (IVLF…VMSL) and 33-53 (MSGL…ISLL). Histidine 140 serves as a coordination point for Zn(2+). Glutamate 141 is a catalytic residue. Histidine 144 is a binding site for Zn(2+). A run of 2 helical transmembrane segments spans residues 155-175 (LLQG…GGFI) and 193-213 (GIVL…TMWF). Glutamate 218 serves as a coordination point for Zn(2+).

The protein belongs to the peptidase M48B family. Zn(2+) serves as cofactor.

It localises to the cell inner membrane. This Xylella fastidiosa (strain M23) protein is Protease HtpX.